Here is a 449-residue protein sequence, read N- to C-terminus: Protein translocase subunit SecD (449 aa).

The next 6 membrane-spanning stretches (helical) occupy residues 6–26 (GLVF…VLPT), 272–292 (LAVK…IAFY), 294–314 (LPGL…LALF), 317–337 (VPVT…GMAV), 379–399 (TFIA…GAPV), and 401–421 (GFAV…IFVT).

The protein belongs to the SecD/SecF family. SecD subfamily. As to quaternary structure, forms a complex with SecF. Part of the essential Sec protein translocation apparatus which comprises SecA, SecYEG and auxiliary proteins SecDF. Other proteins may also be involved.

Its subcellular location is the cell membrane. Functionally, part of the Sec protein translocase complex. Interacts with the SecYEG preprotein conducting channel. SecDF uses the proton motive force (PMF) to complete protein translocation after the ATP-dependent function of SecA. The chain is Protein translocase subunit SecD from Dehalococcoides mccartyi (strain VS).